The sequence spans 612 residues: Zinc metalloproteinase-disintegrin-like HV1 (612 aa).

The signal sequence occupies residues 1-20 (MIQVLLVTICLAVFPYQGSS). The propeptide occupies 21 to 188 (IILESGNVND…SIKEDSQSNL (168 aa)). The Peptidase M12B domain occupies 200–396 (KYVKFFLVAD…NMPQCILKKP (197 aa)). Asn219 carries an N-linked (GlcNAc...) asparagine glycan. Disulfide bonds link Cys311–Cys391, Cys351–Cys375, and Cys353–Cys358. His336 contributes to the Zn(2+) binding site. Glu337 is an active-site residue. Positions 340 and 346 each coordinate Zn(2+). The Disintegrin domain maps to 404–489 (PPVCGNYFVE…AECTDRFQRN (86 aa)). Val406, Asn409, Phe411, Glu413, Glu416, and Asp419 together coordinate Ca(2+). Disulfide bonds link Cys407–Cys436, Cys418–Cys431, Cys420–Cys426, Cys430–Cys453, Cys444–Cys450, Cys449–Cys475, Cys462–Cys482, Cys469–Cys500, Cys493–Cys505, Cys512–Cys562, Cys527–Cys573, Cys540–Cys550, Cys557–Cys599, and Cys593–Cys605. The short motif at 468–470 (ECD) is the D/ECD-tripeptide element. The Ca(2+) site is built by Asp470, Met471, Asp473, Asp484, and Arg485. An N-linked (GlcNAc...) asparagine glycan is attached at Asn502. N-linked (GlcNAc...) asparagine glycosylation occurs at Asn609.

The protein belongs to the venom metalloproteinase (M12B) family. P-III subfamily. P-IIIc sub-subfamily. As to quaternary structure, homodimer; disulfide-linked. The cofactor is Zn(2+). Expressed by the venom gland.

It localises to the secreted. With respect to regulation, inhibited by EDTA and EGTA. In terms of biological role, snake venom zinc metalloproteinase-disintegrin-like that potently activates prothrombin (F2). Does not elicit any hemorrhagic response. Barely inhibits collagen-induced platelet aggregation. Hydrolyzes the alpha-chain of fibrin and fibrinogen (FGA), without affecting the Bbeta- and gamma-chains. Induces apoptosis in cultured vascular endothelial cells. The chain is Zinc metalloproteinase-disintegrin-like HV1 from Protobothrops flavoviridis (Habu).